Consider the following 316-residue polypeptide: MYEWLNALPKAELHLHLEGTLEPELLFALAERNRIALPWNDVETLRKAYAFNNLQEFLDLYYAGADVLRSEQDFYDLTWAYLQKCKAQNVVHVEPFFDPQTHTDRGIPFEVVLAGIRAALRDGEKQLGIRHGLILSFLRHLSEEEAQKTLDQALPFRDAFVAVGLDSSEVGHPPRKFQRVFDRARSEGFLTVAHAGEEGPPEYIWEALDLLKVERIDHGVRAFEDERLMRRLIDEQIPLTVCPLSNTKLCVFDDMSQHTILDMLERGVKVTVNSDDPAYFGGYVTENFHALQQSLGMTEEQARRLAQNSLDARLVK.

The Zn(2+) site is built by His14, His16, and His194. Residue Glu197 is the Proton donor of the active site. Zn(2+) is bound at residue Asp275. Asp276 lines the substrate pocket.

This sequence belongs to the metallo-dependent hydrolases superfamily. Adenosine and AMP deaminases family. Adenine deaminase type 2 subfamily. It depends on Zn(2+) as a cofactor.

It catalyses the reaction adenine + H2O + H(+) = hypoxanthine + NH4(+). Its function is as follows. Catalyzes the hydrolytic deamination of adenine to hypoxanthine. Plays an important role in the purine salvage pathway and in nitrogen catabolism. This is Adenine deaminase from Pseudomonas paraeruginosa (strain DSM 24068 / PA7) (Pseudomonas aeruginosa (strain PA7)).